The following is a 2255-amino-acid chain: MEPSDTERCDVGILFGPQSSDMDEALSCIRSYVLEQPAVRYLVDLVLELPSLWPEIKNAWPALSQVPGEEQLVALGRFFNGGPFPASDEAMNVITTPVTVIRHIVEFYKVKETMKGFQARDVQGFCVGFLAATAVAASCDETAFRALVSKIIRLAVCIGGLVDLDELAVHRARSMAVRWDGEEDYDRLEQVLAAHPEAYIACVTDANRATLTVPKSLAPQMIQDLANHGLSVREIRLCGRFHHPDHTAAVEQMSRLCERDCRFQLPDASSLSLPLRSNINGEVIRTGQLHTIALQSILCFRSQWLITVTAALASITMTDESIRLVSIGPHQCVPRMAQSKLIRTVTSSPVDGCYEAINGTGAAPVRPIAVTGMACRYPQANSVEELWEMLELGKCAVKPLPNDRLKMVELLREPKGPYWGHYLEEPDMFDHRFFGISAREAATMDPQQRLLLQVAYEAMESAGYCGLRSSQIPRDVGCYVGVGSDDYTDNVGSHHANAYSAPGTLQAFNTGRISHYFGWSGPSVVVDTACSSAAVAIHLACQALRTKDCSVAIAGGVNVMTSPKVTQNLAAASFLSPTGASKAFDADADGYCRGEGAGLVVLRPLEDAISDVDPILAVITGTAVNQGSNCSPITVPVSESQMSLYGKSLAASGIAPEDVTYVEAHGTGTQVGDPIEFDSIRRMFGGRHRSEELYVGSIKDNIGHTETSSGVAGLVKTILMMQKGRIPKQANFSRLNPKIPAPEGDRIVIPKQSTDWKSARRVAMVTNYGAAGSNAAIVLRQHTITTNTGSSWLSDVPVFVAAKSPESLRSYCYKMQAFLRQTAGLLGCTMRDITYNLAIKQNRDLDFLVSFPTPSQDPMTLLSQLESVAAGVTDLQQRPAQAPSVILCFGGQNGNTAHISQDLFAGCHLLQAHLADCEKICQSMGLPSLFPTIFQEEPIHDLVNLHCILFAIQYASAMCWIHSGLQVKRMLGHSFGQLTALCVAGGLTLIDAIRLVSERARLIETSWAGDHGVMLSVDASEAEVRALVNRAGDTVDLACYNGARSYVLAGDEISIQVVEKLADGMRIKRLPNTHAFHSRLVDSIVPGLRKLAQSLKYHPTTIPVEACSEDGSAWTCVTPDQIVAHSRMPVHFDSAVQRAANHVQGPVVWLEAGSASPIVSMVRRVVEESSSSRAHLYQASDLKSPQAQANLAKATSGLWANGIPTSHWTEYDPLAFLPASAPIAEASSEPMGLVQVLEKRPSECLFSVNTKDPLYRTCTQGHAVVEQNLCPASLYLEMVVSAAGCLSSAGLITAMPHLQELSISAPLVLEPDGDVLLRLSQSPAEKTAWTFSLFTQAGQKAPVSHATGRISLHPFDSTSTILSRFRSLDRLMNPSRPDSIASLPSSSGLKGSAVYQAFRRVVNYADYYRGVESVFCVSTEATGRVFVPLSLSRESACDPILIDNFVQVAGVHVNCLADVPEDEVYVCSAVGEAFIGEVFMKRDPAAPQPWRVYSNYDRLSKGQVACDVFVMDQKSGQLAIAILAATFTSVSIRALTRTLAKLNNHQPSMLATNEPSAGHKEVNSILNVVDRPPPTAATVDTNKFPAIQAMLSDLLGVGLDELSPYSSLMAIGVDSLMSTEVLTEIKKRFGVNITSAELGEIPDIQCLVQAIFPGASVAQKQATTSKMPPLSDLAESVFNGPAPPDALMLAQKAYDLFGTTQANTDYSQITKWAGFCESVFPKQMALVTAYVVEAFRALGYPLELLHAGQAVPLIPVLPQHESVRNQLYEVLKFSKLICRKDDGMFRTAEAVPSDTSLLLHEDIIKEYPHHASEHTLLRTTGSRLAECLSGSADPLALLFQNADARRVMEDVYTNAPMFKSATMHLAQYLQDLVILLRSRRDIKILEIGAGTGGTTKYLVSQLAAVPGLRFEYTFTDISTSLVTLAKKKFNGYSCIQYATLNIEQDPPDDLLGQYDIVLSTNCIHATRNIAHSCDNIRKLLRPDGILCLIELTRNLFWFDLVFGLLEGWWLFNDGRNHALATEQFWNESLRQAGYNWVNWSCNDSRESEILRLIVASPTLPHGASQILFRSPLVTEETVKYDEKDGVQLLADIYYPSEVDDAHRRRPIALLIHGGGHVMLSRKDIRSQQIKMLLNSGFLPVSIDYRLCPETSLTEGPMRDVRDALVWTRRTLPRLSLKRPDIRPNGDQVVAVGWSTGGHLAMTLSWTASLCGVRAPEAILSFYCPTDYSDPFWSQPNFPYGRDIAPQMKCTIFGMQ.

The interval 13–251 (ILFGPQSSDM…HHPDHTAAVE (239 aa)) is N-terminal acylcarrier protein transacylase domain (SAT). Residues 365 to 781 (VRPIAVTGMA…GSNAAIVLRQ (417 aa)) form the Ketosynthase family 3 (KS3) domain. Catalysis depends on for beta-ketoacyl synthase activity residues C530, H665, and H704. The interval 887–1187 (LCFGGQNGNT…QASDLKSPQA (301 aa)) is malonyl-CoA:ACP transacylase (MAT) domain. S974 functions as the For acyl/malonyl transferase activity in the catalytic mechanism. An N-terminal hotdog fold region spans residues 1229–1357 (EPMGLVQVLE…GRISLHPFDS (129 aa)). In terms of domain architecture, PKS/mFAS DH spans 1229–1536 (EPMGLVQVLE…FTSVSIRALT (308 aa)). Residues 1232-1535 (GLVQVLEKRP…TFTSVSIRAL (304 aa)) are product template (PT) domain. H1262 functions as the Proton acceptor; for dehydratase activity in the catalytic mechanism. Residues 1385 to 1536 (SSSGLKGSAV…FTSVSIRALT (152 aa)) are C-terminal hotdog fold. Catalysis depends on D1443, which acts as the Proton donor; for dehydratase activity. The 75-residue stretch at 1581 to 1655 (TNKFPAIQAM…CLVQAIFPGA (75 aa)) folds into the Carrier domain. An O-(pantetheine 4'-phosphoryl)serine modification is found at S1615. Residues 1809–2042 (HHASEHTLLR…GYNWVNWSCN (234 aa)) are methyltransferase (CMeT) domain. The thioesterase (TE) domain stretch occupies residues 2109 to 2227 (LLIHGGGHVM…ILSFYCPTDY (119 aa)). Residue S2194 is the For thioesterase activity of the active site.

The catalysed reaction is 3 malonyl-CoA + acetyl-CoA + 2 S-adenosyl-L-methionine = 3,5-dimethylorsellinate + 2 S-adenosyl-L-homocysteine + 3 CO2 + 4 CoA. It functions in the pathway secondary metabolite biosynthesis; terpenoid biosynthesis. Functionally, non-reducing polyketide synthase; part of the gene cluster that mediates the biosynthesis of novofumigatonin, a heavily oxygenated meroterpenoid containing a unique orthoester moiety. The first step of the pathway is the synthesis of 3,5-dimethylorsellinic acid (DMOA) by the polyketide synthase nvfA via condensation of one acetyl-CoA starter unit with 3 malonyl-CoA units and 2 methylations. DMOA is then converted to farnesyl-DMOA by the farnesyltransferase nvfB. Epoxydation by FAD-dependent monooxygenase nvfK, followed by a protonation-initiated cyclization catalyzed by the terpene cyclase nvfL leads to the production of asnavolin H. The short chain dehydrogenase nvfC then as a 3-OH dehydrogenase of asnovolin H to yield chemesin D. There are two branches to synthesize asnovolin A from chemesin D. In one branch, chemesin D undergoes Baeyer-Villiger oxidation by nvfH, methylation by nvfJ, and enoyl reduction by the nvfM D enoylreductase that reduces the double bond between C-5'and C-6', to form respectively asnovolin I, asnovolin K, and asnovolin A. In the other branch, the methylation precedes the Baeyer-Villiger oxidation and the enoyl reduction to yield asnovolin A via the asnovolin J intermediate. Asnovolin A is further converted to fumigatonoid A by the Fe(II)/2-oxoglutarate-dependent dioxygenase nvfI that catalyzes an endoperoxidation reaction. The alpha/beta hydrolase nvfD then acts as an epimerase that converts fumigatonoid A to its C-5' epimer, which then undergoes spontaneous or nvfD-catalyzed lactonization. The following step utilizes the ketoreductase nvfG to produce fumigatonoid B. The dioxygenase nvfE further converts fumigatonoid B into fumigatonoid C. Finally the Fe(II)/2-oxoglutarate-dependent dioxygenase nvfF catalyzes two rounds of oxidation to transform fumigatonoid C into the end product, novofumigatonin A. The chain is Non-reducing polyketide synthase nvfA from Aspergillus novofumigatus (strain IBT 16806).